We begin with the raw amino-acid sequence, 962 residues long: Putative primase C962R (962 aa).

The SF3 helicase domain maps to 607-775; that stretch reads ELDARLWIMF…PDPNNSYEKK (169 aa). 636–643 lines the ATP pocket; it reads GGGCNGKT.

Belongs to the asfivirus helicase C962R family.

The protein is Putative primase C962R of Ornithodoros (relapsing fever ticks).